A 147-amino-acid chain; its full sequence is Cilia- and flagella-associated protein 90 (147 aa).

Positions 1 to 36 (MEDDEEETTASTLRGKPRPPPVSAQSAFSYIPPRRL) are disordered.

As to quaternary structure, microtubule inner protein component of sperm flagellar doublet microtubules.

It is found in the cytoplasm. The protein resides in the cytoskeleton. Its subcellular location is the cilium axoneme. It localises to the flagellum axoneme. Its function is as follows. Microtubule inner protein (MIP) part of the dynein-decorated doublet microtubules (DMTs) in cilia axoneme, which is required for motile cilia beating. This Homo sapiens (Human) protein is Cilia- and flagella-associated protein 90.